A 1679-amino-acid polypeptide reads, in one-letter code: Lysophospholipase NTE1 (1679 aa).

Residues M1–N20 show a composition bias toward low complexity. The disordered stretch occupies residues M1–S21. At M1 to Q49 the chain is on the cytoplasmic side. A helical transmembrane segment spans residues T50 to A70. The Lumenal segment spans residues S71 to T103. Residues L104–M124 traverse the membrane as a helical segment. Residues K125 to I1679 lie on the Cytoplasmic side of the membrane. The segment covering S261–T274 has biased composition (basic and acidic residues). The interval S261–N304 is disordered. Positions D275–N295 are enriched in acidic residues. Residues S300 and S312 each carry the phosphoserine modification. Disordered stretches follow at residues S498 to D527 and D586 to R672. Composition is skewed to polar residues over residues P592–T606 and F630–T652. Residues S632, S634, S653, S661, S670, S680, and S739 each carry the phosphoserine modification. Residues K775–E800 are disordered. The span at K788–E800 shows a compositional bias: basic and acidic residues. T803 is subject to Phosphothreonine. A nucleoside 3',5'-cyclic phosphate-binding positions include T803–L947 and S943–K1074. Residues S855–T882 form a disordered region. The segment covering M862 to S873 has biased composition (polar residues). The region spanning L1373–R1537 is the PNPLA domain. A GXGXXG motif is present at residues G1377 to G1382. A GXSXG motif is present at residues G1404–G1408. S1406 acts as the Nucleophile in catalysis. D1524 acts as the Proton acceptor in catalysis. Positions D1524–G1526 match the DGA/G motif.

Belongs to the NTE family.

It localises to the endoplasmic reticulum membrane. It is found in the lipid droplet. It catalyses the reaction a 1-acyl-sn-glycero-3-phosphocholine + H2O = sn-glycerol 3-phosphocholine + a fatty acid + H(+). The catalysed reaction is a 1,2-diacyl-sn-glycero-3-phosphocholine + 2 H2O = sn-glycerol 3-phosphocholine + 2 a carboxylate + 2 H(+). Its activity is regulated as follows. Positively regulated by SEC14. Inhibited by organophosphorus esters in the order phenyl saligenin phosphate (PSP) &gt; phenyldipentyl phosphinate (PDPP) = diisopropyl fluorophosphate (DFP) &gt; and paraoxon (PXN). Functionally, intracellular phospholipase B that catalyzes the double deacylation of phosphatidylcholine (PC) to glycerophosphocholine (GroPCho). Plays an important role in membrane lipid homeostasis. Responsible for the rapid PC turnover in response to inositol, elevated temperatures, or when choline is present in the growth medium. NTE1 activity impacts the repressing transcriptional activity of OPI1, the main regulator of phospholipid synthesis gene transcription. In Saccharomyces cerevisiae (strain ATCC 204508 / S288c) (Baker's yeast), this protein is Lysophospholipase NTE1 (NTE1).